A 117-amino-acid chain; its full sequence is Immunoglobulin heavy variable 1-2 (117 aa).

An N-terminal signal peptide occupies residues 1-19 (MDWTWRILFLVAAATGAHS). Gln-20 carries the post-translational modification Pyrrolidone carboxylic acid. Residues 20-44 (QVQLVQSGAEVKKPGASVKVSCKAS) are framework-1. One can recognise an Ig-like domain in the interval 20–117 (QVQLVQSGAE…DDTAVYYCAR (98 aa)). Cys-41 and Cys-115 are joined by a disulfide. A complementarity-determining-1 region spans residues 45-52 (GYTFTGYY). The tract at residues 53 to 69 (MHWVRQAPGQGLEWMGW) is framework-2. The segment at 70 to 77 (INPNSGGT) is complementarity-determining-2. The segment at 78-115 (NYAQKFQGWVTMTRDTSISTAYMELSRLRSDDTAVYYC) is framework-3. A complementarity-determining-3 region spans residues 116 to 117 (AR).

In terms of assembly, immunoglobulins are composed of two identical heavy chains and two identical light chains; disulfide-linked.

It is found in the secreted. It localises to the cell membrane. V region of the variable domain of immunoglobulin heavy chains that participates in the antigen recognition. Immunoglobulins, also known as antibodies, are membrane-bound or secreted glycoproteins produced by B lymphocytes. In the recognition phase of humoral immunity, the membrane-bound immunoglobulins serve as receptors which, upon binding of a specific antigen, trigger the clonal expansion and differentiation of B lymphocytes into immunoglobulins-secreting plasma cells. Secreted immunoglobulins mediate the effector phase of humoral immunity, which results in the elimination of bound antigens. The antigen binding site is formed by the variable domain of one heavy chain, together with that of its associated light chain. Thus, each immunoglobulin has two antigen binding sites with remarkable affinity for a particular antigen. The variable domains are assembled by a process called V-(D)-J rearrangement and can then be subjected to somatic hypermutations which, after exposure to antigen and selection, allow affinity maturation for a particular antigen. In Homo sapiens (Human), this protein is Immunoglobulin heavy variable 1-2.